A 465-amino-acid chain; its full sequence is Argininosuccinate lyase (465 aa).

This sequence belongs to the lyase 1 family. Argininosuccinate lyase subfamily.

It is found in the cytoplasm. The catalysed reaction is 2-(N(omega)-L-arginino)succinate = fumarate + L-arginine. Its pathway is amino-acid biosynthesis; L-arginine biosynthesis; L-arginine from L-ornithine and carbamoyl phosphate: step 3/3. The sequence is that of Argininosuccinate lyase from Aromatoleum aromaticum (strain DSM 19018 / LMG 30748 / EbN1) (Azoarcus sp. (strain EbN1)).